Reading from the N-terminus, the 719-residue chain is Exonuclease mut-7 homolog (719 aa).

Positions 1–22 are disordered; sequence MSKSNNVAPPCRQDQLGFVPAG. A 3'-5' exonuclease domain is found at 575-629; the sequence is NLANLVRLCLGKKLDKSNQFSNWAQRPLRKEQLRYAALDAFCLLEIYDAIEKQLT. The tract at residues 644 to 719 is disordered; sequence NDVRPPSDSG…FEGPNTKSVL (76 aa). The segment covering 667–678 has biased composition (basic residues); it reads RRNHRDKYNKRH. Composition is skewed to polar residues over residues 683-692 and 706-719; these read DSNSGNSSRA and EQQT…KSVL.

It belongs to the mut-7 family. The cofactor is Mg(2+).

Possesses 3'-5' exoribonuclease activity. Required for 3'-end trimming of AGO1-bound miRNAs. The polypeptide is Exonuclease mut-7 homolog (Aedes aegypti (Yellowfever mosquito)).